The following is a 208-amino-acid chain: 3-demethoxyubiquinol 3-hydroxylase (208 aa).

6 residues coordinate Fe cation: Glu-57, Glu-87, His-90, Glu-139, Glu-171, and His-174.

This sequence belongs to the COQ7 family. Fe cation is required as a cofactor.

The protein localises to the cell membrane. The catalysed reaction is a 5-methoxy-2-methyl-3-(all-trans-polyprenyl)benzene-1,4-diol + AH2 + O2 = a 3-demethylubiquinol + A + H2O. The protein operates within cofactor biosynthesis; ubiquinone biosynthesis. Its function is as follows. Catalyzes the hydroxylation of 2-nonaprenyl-3-methyl-6-methoxy-1,4-benzoquinol during ubiquinone biosynthesis. This Burkholderia ambifaria (strain MC40-6) protein is 3-demethoxyubiquinol 3-hydroxylase.